A 1889-amino-acid chain; its full sequence is E3 ubiquitin-protein ligase UBR3 (1889 aa).

Residues 1-27 form a disordered region; the sequence is MAAAAAAAAVGDPQPPQPEAPAQGLAL. A UBR-type zinc finger spans residues 118–189; sequence ALCGLVWTAN…ESGFCRRHQI (72 aa). Positions 338 to 362 are disordered; the sequence is LGQIDSSDEEDQDGSQGLGKRKRVK. A phosphoserine mark is found at Ser343 and Ser344. Helical transmembrane passes span 761–781 and 919–939; these read MLEG…HLGM and LLHC…ILMD. Residues 1167-1199 are a coiled coil; sequence KKITAAEKKTLDKEERRQKARERQQKLLAEFAS. At Ser1199 the chain carries Phosphoserine. Residues 1306–1364 form an RING-type; degenerate zinc finger; that stretch reads DSSCLLAVSIGWEGGVYVQTCGHTLHIDCHKSYMESLRNDQVLQGFSVDKGEFTCPLCR. Residues 1807–1827 traverse the membrane as a helical segment; the sequence is QNCGAGTGIFLLINASVIIII.

Belongs to the E3 ubiquitin-protein ligase UBR1-like family. In terms of assembly, interacts with UBE2A and UBE2B. As to expression, expressed in numerous cells of the smell, touch, vision, hearing and taste senses. Expressed in cells of the olfactory pathway, including the olfactory cell layer of the main olfactory epithelium (MOE), a mitral neuron cell layer of the olfactory bulb (OB), and a pyramidal cell layer of the piriform cortex of the olfactory cortex (OC). Expressed in the vomeronasal sensory epithelium of the vomeronasal organ (VNO) and the mitral cells of the accessory olfactory bulb. Expressed in tactile tissues, including the dorsal root ganglion, trigeminal ganglion and follicle-sinus complexes. Expressed in cells between hair follicle and sinus and also in the region of the rete ridge collar. Expressed in taste buds of the fungiform, circumvallate, and foliate papillae. Expressed in the spiral ganglion, the organ of Corti of the cochlea in the inner ear, in the sensory epithelium of macula and vestibular ganglion of the balancing system (at protein level). Expressed in the liver and skeletal muscle.

The protein resides in the membrane. The enzyme catalyses S-ubiquitinyl-[E2 ubiquitin-conjugating enzyme]-L-cysteine + [acceptor protein]-L-lysine = [E2 ubiquitin-conjugating enzyme]-L-cysteine + N(6)-ubiquitinyl-[acceptor protein]-L-lysine.. Its pathway is protein modification; protein ubiquitination. Its function is as follows. E3 ubiquitin-protein ligase which is a component of the N-end rule pathway. Does not bind to proteins bearing specific N-terminal residues that are destabilizing according to the N-end rule, leading to their ubiquitination and subsequent degradation. May play a role in Shh signaling by mediating the ubiquitination of Kif7. May be important for MYH9 function in certain tissues, possibly by regulating the ubiquitination of MYH9 and consequently affecting its interaction with MYO7A. This is E3 ubiquitin-protein ligase UBR3 (Ubr3) from Mus musculus (Mouse).